Consider the following 330-residue polypeptide: MKKNIAIVAGGDSSEIVISLKSADGIYSFIDKDKYNLYIAIVKRDEWAVILPSGEHTPIDKNDFSFKENGVTRHFDFAYITIHGTPGEDGRLQGYFDMIGMPYSSCGMLVSALTFNKYVCNHYLKDFGVKIAASIHLFKGETITDEEVVTRLGLPIFVKPNDGGSSFGVTKVKEVSAIQPAIAKAFGEGREVILERFIDGTEVTCGCYKVEGKEVVFPLTEVVTNNEFFDFDAKYNGQVDEITPARISTELTELIQCETSRIYDILGAKGLIRVDYIIPADGEPVLLEINTTPGMTATSFIPQQVRAAGLDIKDVMTDIIEDELKNRKTK.

Residues 121 to 321 (NHYLKDFGVK…IKDVMTDIIE (201 aa)) enclose the ATP-grasp domain. An ATP-binding site is contributed by 149–204 (VTRLGLPIFVKPNDGGSSFGVTKVKEVSAIQPAIAKAFGEGREVILERFIDGTEVT). 3 residues coordinate Mg(2+): Asp-275, Glu-288, and Asn-290.

This sequence belongs to the D-alanine--D-alanine ligase family. The cofactor is Mg(2+). Mn(2+) is required as a cofactor.

Its subcellular location is the cytoplasm. It carries out the reaction 2 D-alanine + ATP = D-alanyl-D-alanine + ADP + phosphate + H(+). Its pathway is cell wall biogenesis; peptidoglycan biosynthesis. In terms of biological role, cell wall formation. This chain is D-alanine--D-alanine ligase, found in Parabacteroides distasonis (strain ATCC 8503 / DSM 20701 / CIP 104284 / JCM 5825 / NCTC 11152).